The chain runs to 78 residues: Putative membrane protein insertion efficiency factor (78 aa).

This sequence belongs to the UPF0161 family.

It localises to the cell inner membrane. Its function is as follows. Could be involved in insertion of integral membrane proteins into the membrane. This chain is Putative membrane protein insertion efficiency factor, found in Prochlorococcus marinus subsp. pastoris (strain CCMP1986 / NIES-2087 / MED4).